Here is a 357-residue protein sequence, read N- to C-terminus: Probable dual-specificity RNA methyltransferase RlmN (357 aa).

E92 functions as the Proton acceptor in the catalytic mechanism. The Radical SAM core domain occupies 98–336; it reads HKYGLSVCVT…CGVRLEHGTD (239 aa). An intrachain disulfide couples C105 to C341. [4Fe-4S] cluster-binding residues include C112, C116, and C119. Residues 164–165, S196, 219–221, and N297 contribute to the S-adenosyl-L-methionine site; these read GE and SLH. C341 serves as the catalytic S-methylcysteine intermediate.

This sequence belongs to the radical SAM superfamily. RlmN family. [4Fe-4S] cluster serves as cofactor.

The protein resides in the cytoplasm. It catalyses the reaction adenosine(2503) in 23S rRNA + 2 reduced [2Fe-2S]-[ferredoxin] + 2 S-adenosyl-L-methionine = 2-methyladenosine(2503) in 23S rRNA + 5'-deoxyadenosine + L-methionine + 2 oxidized [2Fe-2S]-[ferredoxin] + S-adenosyl-L-homocysteine. The enzyme catalyses adenosine(37) in tRNA + 2 reduced [2Fe-2S]-[ferredoxin] + 2 S-adenosyl-L-methionine = 2-methyladenosine(37) in tRNA + 5'-deoxyadenosine + L-methionine + 2 oxidized [2Fe-2S]-[ferredoxin] + S-adenosyl-L-homocysteine. Its function is as follows. Specifically methylates position 2 of adenine 2503 in 23S rRNA and position 2 of adenine 37 in tRNAs. The protein is Probable dual-specificity RNA methyltransferase RlmN of Exiguobacterium sibiricum (strain DSM 17290 / CCUG 55495 / CIP 109462 / JCM 13490 / 255-15).